The sequence spans 144 residues: MEKFLDINEIKKIIPHRYPFLLVDKITELEEGKSAVGYKNVTANEYFFNGHFPEEPVMPGVLIIEALAQVGAVAILSKEEFKGKIAYFGGINKAKFRKKVVPGDVLRLSIELTKIKGVAGVGKAVATVDGKVVAEAELLFVIGK.

Residue histidine 51 is part of the active site.

Belongs to the thioester dehydratase family. FabZ subfamily.

It is found in the cytoplasm. It carries out the reaction a (3R)-hydroxyacyl-[ACP] = a (2E)-enoyl-[ACP] + H2O. Involved in unsaturated fatty acids biosynthesis. Catalyzes the dehydration of short chain beta-hydroxyacyl-ACPs and long chain saturated and unsaturated beta-hydroxyacyl-ACPs. The chain is 3-hydroxyacyl-[acyl-carrier-protein] dehydratase FabZ from Clostridium botulinum (strain Loch Maree / Type A3).